A 272-amino-acid polypeptide reads, in one-letter code: Pyrroline-5-carboxylate reductase (272 aa).

Belongs to the pyrroline-5-carboxylate reductase family.

The protein resides in the cytoplasm. It carries out the reaction L-proline + NADP(+) = (S)-1-pyrroline-5-carboxylate + NADPH + 2 H(+). The enzyme catalyses L-proline + NAD(+) = (S)-1-pyrroline-5-carboxylate + NADH + 2 H(+). Its pathway is amino-acid biosynthesis; L-proline biosynthesis; L-proline from L-glutamate 5-semialdehyde: step 1/1. Functionally, catalyzes the reduction of 1-pyrroline-5-carboxylate (PCA) to L-proline. The sequence is that of Pyrroline-5-carboxylate reductase from Vibrio alginolyticus.